The sequence spans 333 residues: Procathepsin L (333 aa).

A signal peptide spans 1–17 (MNPTLILAAFCLGIASA). A propeptide spans 18-113 (TLTFDHSLEA…KVFQEPLFYE (96 aa)) (activation peptide). Glu122 serves as a coordination point for Zn(2+). 2 disulfides stabilise this stretch: Cys135–Cys178 and Cys169–Cys211. Cys138 is a catalytic residue. Residues Glu163, Asp184, Glu199, Glu205, and Glu209 each contribute to the Zn(2+) site. Residue Asn221 is glycosylated (N-linked (GlcNAc...) asparagine). The Zn(2+) site is built by Asp227, Asp250, His253, Asp273, and Asp275. Cys269 and Cys322 form a disulfide bridge. The active site involves His276. A propeptide spanning residues 289-291 (ESD) is cleaved from the precursor. Asn300 is an active-site residue.

This sequence belongs to the peptidase C1 family. In terms of assembly, dimer of a heavy and a light chain linked by disulfide bonds. Interacts with Long isoform of CD74/Ii chain; the interaction stabilizes the conformation of mature CTSL. Post-translationally, during export along the endocytic pathway, pro-CTSL undergoes several proteolytic cleavages to generate the CTSL single-chain and two-chain mature forms, composed of a heavy chain linked to a light chain by disulfide bonds. Autocleavage; produces the single-chain CTSL after cleavage of the propeptide. The cleavage can be intermolecular.

The protein resides in the lysosome. The protein localises to the apical cell membrane. It is found in the cytoplasmic vesicle. Its subcellular location is the secretory vesicle. It localises to the chromaffin granule. The protein resides in the secreted. The protein localises to the extracellular space. It is found in the nucleus. The catalysed reaction is Specificity close to that of papain. As compared to cathepsin B, cathepsin L exhibits higher activity toward protein substrates, but has little activity on Z-Arg-Arg-NHMec, and no peptidyl-dipeptidase activity.. With respect to regulation, inhibited by the propeptide produced by autocleavage. Long isoform of CD74/Ii chain stabilizes the conformation of mature CTSL by binding to its active site and serving as a chaperone to help maintain a pool of mature enzyme in endocytic compartments and extracellular space of APCs. IFNG enhances the conversion into the CTSL mature and active form. Inhibited by CST6. Inhibited by the glycopeptide antibiotic teicoplanin. Inhibited by amantadine. Functionally, thiol protease important for the overall degradation of proteins in lysosomes. Plays a critical for normal cellular functions such as general protein turnover, antigen processing and bone remodeling. Involved in the solubilization of cross-linked TG/thyroglobulin and in the subsequent release of thyroid hormone thyroxine (T4) by limited proteolysis of TG/thyroglobulin in the thyroid follicle lumen. In neuroendocrine chromaffin cells secretory vesicles, catalyzes the prohormone proenkephalin processing to the active enkephalin peptide neurotransmitter. In thymus, regulates CD4(+) T cell positive selection by generating the major histocompatibility complex class II (MHCII) bound peptide ligands presented by cortical thymic epithelial cells. Also mediates invariant chain processing in cortical thymic epithelial cells. Major elastin-degrading enzyme at neutral pH. Accumulates as a mature and active enzyme in the extracellular space of antigen presenting cells (APCs) to regulate degradation of the extracellular matrix in the course of inflammation. Secreted form generates endostatin from COL18A1. Critical for cardiac morphology and function. Plays an important role in hair follicle morphogenesis and cycling, as well as epidermal differentiation. Required for maximal stimulation of steroidogenesis by TIMP1. In terms of biological role, (Microbial infection) In cells lacking TMPRSS2 expression, facilitates human coronaviruses SARS-CoV and SARS-CoV-2 infections via a slow acid-activated route with the proteolysis of coronavirus spike (S) glycoproteins in lysosome for entry into host cell. Proteolysis within lysosomes is sufficient to activate membrane fusion by coronaviruses SARS-CoV and EMC (HCoV-EMC) S as well as Zaire ebolavirus glycoproteins. Its function is as follows. Functions in the regulation of cell cycle progression through proteolytic processing of the CUX1 transcription factor. Translation initiation at downstream start sites allows the synthesis of isoforms that are devoid of a signal peptide and localize to the nucleus where they cleave the CUX1 transcription factor and modify its DNA binding properties. The sequence is that of Procathepsin L from Homo sapiens (Human).